The primary structure comprises 198 residues: Recombination protein RecR (198 aa).

The segment at 57–72 adopts a C4-type zinc-finger fold; the sequence is CSVCGNITDEDPCEIC. A Toprim domain is found at 80–175; that stretch reads EMILVVEQPK…KVTRLAHGLA (96 aa).

The protein belongs to the RecR family.

In terms of biological role, may play a role in DNA repair. It seems to be involved in an RecBC-independent recombinational process of DNA repair. It may act with RecF and RecO. This chain is Recombination protein RecR, found in Latilactobacillus sakei subsp. sakei (strain 23K) (Lactobacillus sakei subsp. sakei).